A 210-amino-acid polypeptide reads, in one-letter code: MAKLRVAYEYTEAEDKSIRLGLFLIISGVVSLFIFGFCWLSPALQDLQATEANCTVLSVQQIGEVFECTFTCGADCRGTSQYPCVQVYVNNSESNSRALLHSDEHQLLTNPKCSYIPPCKRENQKNLESVMNWQQYWKDEIGSQPFTCYFNQHQRPDDVLLHRTHDEIVLLHCFLWPLVTFVVGVLIVVLTICAKSLAVKAEAMKKRKFS.

Residues Met-1–Arg-19 lie on the Cytoplasmic side of the membrane. The chain crosses the membrane as a helical span at residues Leu-20 to Leu-40. The Extracellular segment spans residues Ser-41 to Glu-167. N-linked (GlcNAc...) asparagine glycosylation is found at Asn-53 and Asn-90. A helical transmembrane segment spans residues Ile-168–Val-188. Residues Val-189–Ser-210 are Cytoplasmic-facing.

Belongs to the KCNMB (TC 8.A.14.1) family. KCNMB4 subfamily. In terms of assembly, interacts with KCNMA1 tetramer. There are probably 4 molecules of KCMNB4 per KCNMA1 tetramer. Interacts with FMR1 (via N-terminus). In terms of processing, phosphorylated. Phosphorylation modulates its effect on KCNMA1 activation kinetics. N-glycosylated. A highly glycosylated form is promoted by KCNMA1. Glycosylation, which is not required for the interaction with KCNMA1 and subcellular location, increases protection against charybdotoxin. Predominantly expressed in brain. In brain, it is expressed in the cerebellum, cerebral cortex, medulla, spinal cord, occipital pole, frontal lobe, temporal lobe, putamen, amygdala, caudate nucleus, corpus callosum, hippocampus, substantia nigra and thalamus. Weakly or not expressed in other tissues.

The protein localises to the membrane. Regulatory subunit of the calcium activated potassium KCNMA1 (maxiK) channel. Modulates the calcium sensitivity and gating kinetics of KCNMA1, thereby contributing to KCNMA1 channel diversity. Decreases the gating kinetics and calcium sensitivity of the KCNMA1 channel, but with fast deactivation kinetics. May decrease KCNMA1 channel openings at low calcium concentrations but increases channel openings at high calcium concentrations. Makes KCNMA1 channel resistant to 100 nM charybdotoxin (CTX) toxin concentrations. This chain is Calcium-activated potassium channel subunit beta-4 (KCNMB4), found in Homo sapiens (Human).